The primary structure comprises 409 residues: Imidazolonepropionase (409 aa).

Histidine 70 and histidine 72 together coordinate Fe(3+). Residues histidine 70 and histidine 72 each contribute to the Zn(2+) site. 4-imidazolone-5-propanoate is bound by residues arginine 79, tyrosine 137, and histidine 164. An N-formimidoyl-L-glutamate-binding site is contributed by tyrosine 137. Histidine 225 contributes to the Fe(3+) binding site. Zn(2+) is bound at residue histidine 225. A 4-imidazolone-5-propanoate-binding site is contributed by glutamine 228. N-formimidoyl-L-glutamate contacts are provided by asparagine 314 and glycine 316. Residue threonine 317 participates in 4-imidazolone-5-propanoate binding.

This sequence belongs to the metallo-dependent hydrolases superfamily. HutI family. Zn(2+) serves as cofactor. Fe(3+) is required as a cofactor.

It is found in the cytoplasm. It carries out the reaction 4-imidazolone-5-propanoate + H2O = N-formimidoyl-L-glutamate. It participates in amino-acid degradation; L-histidine degradation into L-glutamate; N-formimidoyl-L-glutamate from L-histidine: step 3/3. In terms of biological role, catalyzes the hydrolytic cleavage of the carbon-nitrogen bond in imidazolone-5-propanoate to yield N-formimidoyl-L-glutamate. It is the third step in the universal histidine degradation pathway. The sequence is that of Imidazolonepropionase from Paenarthrobacter aurescens (strain TC1).